A 350-amino-acid polypeptide reads, in one-letter code: Holliday junction branch migration complex subunit RuvB (350 aa).

The disordered stretch occupies residues methionine 1–aspartate 20. Residues alanine 4 to tyrosine 184 form a large ATPase domain (RuvB-L) region. ATP contacts are provided by residues isoleucine 23, arginine 24, glycine 65, lysine 68, threonine 69, threonine 70, glutamate 131–phenylalanine 133, arginine 174, tyrosine 184, and arginine 221. Threonine 69 serves as a coordination point for Mg(2+). The small ATPAse domain (RuvB-S) stretch occupies residues glycine 185 to aspartate 255. Residues glutamate 258–glutamate 350 form a head domain (RuvB-H) region. The DNA site is built by arginine 294, arginine 313, and arginine 318.

Belongs to the RuvB family. Homohexamer. Forms an RuvA(8)-RuvB(12)-Holliday junction (HJ) complex. HJ DNA is sandwiched between 2 RuvA tetramers; dsDNA enters through RuvA and exits via RuvB. An RuvB hexamer assembles on each DNA strand where it exits the tetramer. Each RuvB hexamer is contacted by two RuvA subunits (via domain III) on 2 adjacent RuvB subunits; this complex drives branch migration. In the full resolvosome a probable DNA-RuvA(4)-RuvB(12)-RuvC(2) complex forms which resolves the HJ.

It localises to the cytoplasm. The catalysed reaction is ATP + H2O = ADP + phosphate + H(+). In terms of biological role, the RuvA-RuvB-RuvC complex processes Holliday junction (HJ) DNA during genetic recombination and DNA repair, while the RuvA-RuvB complex plays an important role in the rescue of blocked DNA replication forks via replication fork reversal (RFR). RuvA specifically binds to HJ cruciform DNA, conferring on it an open structure. The RuvB hexamer acts as an ATP-dependent pump, pulling dsDNA into and through the RuvAB complex. RuvB forms 2 homohexamers on either side of HJ DNA bound by 1 or 2 RuvA tetramers; 4 subunits per hexamer contact DNA at a time. Coordinated motions by a converter formed by DNA-disengaged RuvB subunits stimulates ATP hydrolysis and nucleotide exchange. Immobilization of the converter enables RuvB to convert the ATP-contained energy into a lever motion, pulling 2 nucleotides of DNA out of the RuvA tetramer per ATP hydrolyzed, thus driving DNA branch migration. The RuvB motors rotate together with the DNA substrate, which together with the progressing nucleotide cycle form the mechanistic basis for DNA recombination by continuous HJ branch migration. Branch migration allows RuvC to scan DNA until it finds its consensus sequence, where it cleaves and resolves cruciform DNA. The protein is Holliday junction branch migration complex subunit RuvB of Ectopseudomonas mendocina (strain ymp) (Pseudomonas mendocina).